Consider the following 78-residue polypeptide: Large ribosomal subunit protein eL38 (78 aa).

The protein belongs to the eukaryotic ribosomal protein eL38 family.

This chain is Large ribosomal subunit protein eL38 (RpL38), found in Maconellicoccus hirsutus (Pink hibiscus mealybug).